The sequence spans 150 residues: Arginine repressor (150 aa).

Belongs to the ArgR family.

The protein resides in the cytoplasm. The protein operates within amino-acid biosynthesis; L-arginine biosynthesis [regulation]. Regulates arginine biosynthesis genes. The chain is Arginine repressor from Clostridium kluyveri (strain NBRC 12016).